A 210-amino-acid chain; its full sequence is Redox-sensing transcriptional repressor Rex (210 aa).

Residues 17 to 56 (KYHRYLGDLLDRDIQRISSKELSDIIGFTASQIRQDLNNF) constitute a DNA-binding region (H-T-H motif). 91–96 (GAGNLG) is an NAD(+) binding site.

Belongs to the transcriptional regulatory Rex family. In terms of assembly, homodimer.

The protein localises to the cytoplasm. In terms of biological role, modulates transcription in response to changes in cellular NADH/NAD(+) redox state. This chain is Redox-sensing transcriptional repressor Rex, found in Clostridioides difficile (strain 630) (Peptoclostridium difficile).